The primary structure comprises 452 residues: tRNA modification GTPase MnmE (452 aa).

Positions 21, 78, and 118 each coordinate (6S)-5-formyl-5,6,7,8-tetrahydrofolate. The TrmE-type G domain occupies 214–375 (GMKVVIAGRP…LREHLKQSMG (162 aa)). Asn224 contacts K(+). GTP is bound by residues 224 to 229 (NAGKSS), 243 to 249 (TDIAGTT), 268 to 271 (DTAG), and 333 to 336 (NKAD). Ser228 serves as a coordination point for Mg(2+). Thr243, Ile245, and Thr248 together coordinate K(+). Residue Thr249 participates in Mg(2+) binding. Lys452 lines the (6S)-5-formyl-5,6,7,8-tetrahydrofolate pocket.

It belongs to the TRAFAC class TrmE-Era-EngA-EngB-Septin-like GTPase superfamily. TrmE GTPase family. In terms of assembly, homodimer. Heterotetramer of two MnmE and two MnmG subunits. K(+) is required as a cofactor.

It localises to the cytoplasm. Its function is as follows. Exhibits a very high intrinsic GTPase hydrolysis rate. Involved in the addition of a carboxymethylaminomethyl (cmnm) group at the wobble position (U34) of certain tRNAs, forming tRNA-cmnm(5)s(2)U34. The chain is tRNA modification GTPase MnmE from Pasteurella multocida (strain Pm70).